Reading from the N-terminus, the 94-residue chain is Secretoglobin family 1C member 1 (94 aa).

Positions 1-22 (MKGSSALLVALTVLCICGLTRA) are cleaved as a signal peptide.

This sequence belongs to the secretoglobin family. As to expression, expressed in the olfactory mucosa.

Its subcellular location is the secreted. The sequence is that of Secretoglobin family 1C member 1 (Scgb1c1) from Rattus norvegicus (Rat).